The sequence spans 201 residues: Recombination protein RecR (201 aa).

The C4-type zinc-finger motif lies at 58–73 (CEQCASITDTCPCRIC). Residues 81–178 (DKLCLVSEWD…ELSRLAQGIP (98 aa)) enclose the Toprim domain.

Belongs to the RecR family.

Its function is as follows. May play a role in DNA repair. It seems to be involved in an RecBC-independent recombinational process of DNA repair. It may act with RecF and RecO. The sequence is that of Recombination protein RecR from Maridesulfovibrio salexigens (strain ATCC 14822 / DSM 2638 / NCIMB 8403 / VKM B-1763) (Desulfovibrio salexigens).